We begin with the raw amino-acid sequence, 142 residues long: Large ribosomal subunit protein uL23 (142 aa).

K61 is covalently cross-linked (Glycyl lysine isopeptide (Lys-Gly) (interchain with G-Cter in SUMO)).

The protein belongs to the universal ribosomal protein uL23 family. Component of the large ribosomal subunit (LSU). Mature yeast ribosomes consist of a small (40S) and a large (60S) subunit. The 40S small subunit contains 1 molecule of ribosomal RNA (18S rRNA) and 33 different proteins (encoded by 57 genes). The large 60S subunit contains 3 rRNA molecules (25S, 5.8S and 5S rRNA) and 46 different proteins (encoded by 81 genes). uL23 is associated with the polypeptide exit tunnel.

Its subcellular location is the cytoplasm. Component of the ribosome, a large ribonucleoprotein complex responsible for the synthesis of proteins in the cell. The small ribosomal subunit (SSU) binds messenger RNAs (mRNAs) and translates the encoded message by selecting cognate aminoacyl-transfer RNA (tRNA) molecules. The large subunit (LSU) contains the ribosomal catalytic site termed the peptidyl transferase center (PTC), which catalyzes the formation of peptide bonds, thereby polymerizing the amino acids delivered by tRNAs into a polypeptide chain. The nascent polypeptides leave the ribosome through a tunnel in the LSU and interact with protein factors that function in enzymatic processing, targeting, and the membrane insertion of nascent chains at the exit of the ribosomal tunnel. uL23 is a major component of the universal docking site for these factors at the polypeptide exit tunnel. This is Large ribosomal subunit protein uL23 from Saccharomyces cerevisiae (strain ATCC 204508 / S288c) (Baker's yeast).